The following is a 909-amino-acid chain: Protein translocase subunit SecA (909 aa).

Residues glutamine 87, 105–109, and aspartate 507 contribute to the ATP site; that span reads GEGKT. Disordered stretches follow at residues 567-586 and 859-909; these read RRIDNQLRGRSGRQGDPGSS and YSEA…GKLD. Basic and acidic residues predominate over residues 865–889; sequence EHQSVTEGHEAKQQPFVRKSDKIGR. Residues cysteine 893, cysteine 895, cysteine 904, and histidine 905 each coordinate Zn(2+). Residues 899–909 are compositionally biased toward basic residues; that stretch reads RKYKQCHGKLD.

It belongs to the SecA family. As to quaternary structure, monomer and homodimer. Part of the essential Sec protein translocation apparatus which comprises SecA, SecYEG and auxiliary proteins SecDF-YajC and YidC. Zn(2+) serves as cofactor.

The protein resides in the cell inner membrane. Its subcellular location is the cytoplasm. The catalysed reaction is ATP + H2O + cellular proteinSide 1 = ADP + phosphate + cellular proteinSide 2.. Functionally, part of the Sec protein translocase complex. Interacts with the SecYEG preprotein conducting channel. Has a central role in coupling the hydrolysis of ATP to the transfer of proteins into and across the cell membrane, serving both as a receptor for the preprotein-SecB complex and as an ATP-driven molecular motor driving the stepwise translocation of polypeptide chains across the membrane. This chain is Protein translocase subunit SecA, found in Nitrosomonas eutropha (strain DSM 101675 / C91 / Nm57).